The sequence spans 359 residues: Putative B3 domain-containing protein At3g24850 (359 aa).

2 disordered regions span residues 92–111 (DSEI…LQNS) and 159–192 (EKME…KRTG). A compositionally biased stretch (polar residues) spans 100–111 (TSDSQMKTLQNS). A DNA-binding region (TF-B3) is located at residues 250–351 (FNNLLQNDFL…VLCFAMEQSS (102 aa)).

The protein resides in the nucleus. The sequence is that of Putative B3 domain-containing protein At3g24850 from Arabidopsis thaliana (Mouse-ear cress).